The primary structure comprises 183 residues: ATP-dependent protease subunit HslV (183 aa).

T13 is a catalytic residue. G168, C171, and T174 together coordinate Na(+).

This sequence belongs to the peptidase T1B family. HslV subfamily. A double ring-shaped homohexamer of HslV is capped on each side by a ring-shaped HslU homohexamer. The assembly of the HslU/HslV complex is dependent on binding of ATP.

It localises to the cytoplasm. The catalysed reaction is ATP-dependent cleavage of peptide bonds with broad specificity.. Its activity is regulated as follows. Allosterically activated by HslU binding. Protease subunit of a proteasome-like degradation complex believed to be a general protein degrading machinery. The protein is ATP-dependent protease subunit HslV of Stenotrophomonas maltophilia (strain R551-3).